We begin with the raw amino-acid sequence, 233 residues long: Large ribosomal subunit protein uL1 (233 aa).

The protein belongs to the universal ribosomal protein uL1 family. As to quaternary structure, part of the 50S ribosomal subunit.

Its function is as follows. Binds directly to 23S rRNA. The L1 stalk is quite mobile in the ribosome, and is involved in E site tRNA release. Protein L1 is also a translational repressor protein, it controls the translation of the L11 operon by binding to its mRNA. The protein is Large ribosomal subunit protein uL1 of Campylobacter jejuni subsp. doylei (strain ATCC BAA-1458 / RM4099 / 269.97).